The sequence spans 158 residues: Small ribosomal subunit protein bS6 (158 aa).

Over residues 92–149 (RVDEHEEGPSAMMRKADRDRERDDRGPREGGFRGDREGRGDRDGFRGDRGPRRPREDA) the composition is skewed to basic and acidic residues. Residues 92–158 (RVDEHEEGPS…ADAPAAAVEE (67 aa)) are disordered.

It belongs to the bacterial ribosomal protein bS6 family.

Binds together with bS18 to 16S ribosomal RNA. The protein is Small ribosomal subunit protein bS6 of Rhodopseudomonas palustris (strain ATCC BAA-98 / CGA009).